The following is a 213-amino-acid chain: ER lumen protein-retaining receptor erd-2.1 (213 aa).

Topologically, residues 1-2 (MN) are lumenal. A helical membrane pass occupies residues 3-21 (LFRFTADVAHAIAIVVLLL). At 22–35 (KIWKSRSCEGISGR) the chain is on the cytoplasmic side. A helical membrane pass occupies residues 36-53 (SQLLFALVFVTRYLDLFT). Topologically, residues 54 to 61 (NFFSFYNT) are lumenal. Residues 62-80 (AMKIFYLVASFGTVYLMWA) form a helical membrane-spanning segment. Topologically, residues 81–96 (KFKATYDRNNDSFRIE) are cytoplasmic. The chain crosses the membrane as a helical span at residues 97-110 (FLVIPSMILALLIN). Topologically, residues 111-117 (HEFIFME) are lumenal. Residues 118–137 (VMWTFSIYLEAVAIMPQLFM) form a helical membrane-spanning segment. The Cytoplasmic portion of the chain corresponds to 138–149 (LSRTGNAETITA). A helical transmembrane segment spans residues 150–168 (HYLFALGSYRFLYILNWVY). The Lumenal segment spans residues 169-178 (RYYTESFFDP). Residues 179 to 199 (ISVVAGIVQTVLYADFFYLYI) form a helical membrane-spanning segment. Topologically, residues 200–213 (TRVIQSNRQFEMSA) are cytoplasmic.

This sequence belongs to the ERD2 family.

It localises to the endoplasmic reticulum membrane. Its function is as follows. Required for the retention of luminal endoplasmic reticulum proteins. Determines the specificity of the luminal ER protein retention system. Also required for normal vesicular traffic through the Golgi. The chain is ER lumen protein-retaining receptor erd-2.1 from Caenorhabditis elegans.